The chain runs to 306 residues: Pantothenate kinase (306 aa).

91 to 98 (GSVAVGKS) serves as a coordination point for ATP.

This sequence belongs to the prokaryotic pantothenate kinase family.

It localises to the cytoplasm. The enzyme catalyses (R)-pantothenate + ATP = (R)-4'-phosphopantothenate + ADP + H(+). It functions in the pathway cofactor biosynthesis; coenzyme A biosynthesis; CoA from (R)-pantothenate: step 1/5. The chain is Pantothenate kinase from Streptococcus equi subsp. zooepidemicus (strain MGCS10565).